A 450-amino-acid polypeptide reads, in one-letter code: UPF0236 protein in vanSb 3'region (450 aa).

It belongs to the UPF0236 family.

The sequence is that of UPF0236 protein in vanSb 3'region from Streptococcus gallolyticus (Streptococcus bovis biotype I).